A 471-amino-acid chain; its full sequence is MTQFLPPNLLALFAPRDPVPYLPPLDKLPHEKHHNQPYCGIAPYIREFEDPRDAPPPTRAETREERMERKRREKIERRQQDVENELKIWDPHNDQNAQGDAFKTLFVARVNYDTTESKLRREFEVYGPIKRIHMVYNKRSGKPRGYAFIEYEHERDMHSAYKHADGKKIDGRRVLVDVERGRTVKGWRPRRLGGGLGGTRRGGADVNIRHSGRDDTSRYDERDRDRERERDRRERSRERDKERERRRSRSRERRRRSRSREKEERKRSRERSRDKDKDKDKDKDKEKDKDKDRDRKRRSRSRERKRERDRDREKKEDRVEGEVPESVDVPQDDAQTGDLGIDGIELKQEPEEKNRDRDRERDREKDRDKDRDRDRDRRRSHRDRERDKDRERDRDRRRDRDRDRDRDRDHKRERDRGDRGEKREERVPDNGMVMEQAEETSQDMYLDQESMQSGDGYLSTENGYMMEPPME.

Residues 48 to 78 (FEDPRDAPPPTRAETREERMERKRREKIERR) are disordered. Basic and acidic residues predominate over residues 60-78 (AETREERMERKRREKIERR). Residues 92-202 (HNDQNAQGDA…GGGLGGTRRG (111 aa)) form a required for interaction with U1 RNA region. Residues 103–184 (KTLFVARVNY…LVDVERGRTV (82 aa)) form the RRM domain. A disordered region spans residues 187-471 (WRPRRLGGGL…NGYMMEPPME (285 aa)). A compositionally biased stretch (gly residues) spans 192 to 201 (LGGGLGGTRR). Positions 207 to 245 (NIRHSGRDDTSRYDERDRDRERERDRRERSRERDKERER) are enriched in basic and acidic residues. The span at 246 to 259 (RRSRSRERRRRSRS) shows a compositional bias: basic residues. Basic and acidic residues predominate over residues 260-293 (REKEERKRSRERSRDKDKDKDKDKDKEKDKDKDR). The segment covering 294 to 303 (DRKRRSRSRE) has biased composition (basic residues). Composition is skewed to basic and acidic residues over residues 304–321 (RKRE…RVEG) and 344–428 (IELK…ERVP).

As to quaternary structure, component of the U1 snRNP. The U1 snRNP is composed of the U1 snRNA and the 7 core Sm proteins snrpb, snrpd1, snrpd2, snrpd3, snrpe, snrpf and snrpg that assemble in a heptameric protein ring on the Sm site of the small nuclear RNA to form the core snRNP, and at least three U1 snRNP-specific proteins snrnp70/U1-70K, snrpa/U1-A and snrpc/U1-C.

It is found in the nucleus speckle. Its subcellular location is the nucleus. The protein localises to the nucleoplasm. Its function is as follows. Component of the spliceosomal U1 snRNP, which is essential for recognition of the pre-mRNA 5' splice-site and the subsequent assembly of the spliceosome. snrnp70 binds to the loop I region of U1-snRNA. This Xenopus tropicalis (Western clawed frog) protein is U1 small nuclear ribonucleoprotein 70 kDa (snrnp70).